The primary structure comprises 146 residues: MIIGIGSDLIDITRIAKVIERHGERFLDRVFTEAERAKAERRAKKSELVAATYAKRFAAKEACSKALGTGIRQGVWWRDMGVVNLPGGRPTMVLTGGAKTRLDALTPPGMTARIDLSITDEWPLAQAFVVISAIPAAAEQAVHTSS.

2 residues coordinate Mg(2+): Asp8 and Glu61.

It belongs to the P-Pant transferase superfamily. AcpS family. Mg(2+) serves as cofactor.

Its subcellular location is the cytoplasm. The catalysed reaction is apo-[ACP] + CoA = holo-[ACP] + adenosine 3',5'-bisphosphate + H(+). Functionally, transfers the 4'-phosphopantetheine moiety from coenzyme A to a Ser of acyl-carrier-protein. The protein is Holo-[acyl-carrier-protein] synthase of Rhodopseudomonas palustris (strain ATCC BAA-98 / CGA009).